Reading from the N-terminus, the 321-residue chain is tRNA U34 carboxymethyltransferase (321 aa).

Carboxy-S-adenosyl-L-methionine is bound by residues K90, W104, K109, G129, 151-153 (DPT), 180-181 (IE), M195, Y199, and R314.

Belongs to the class I-like SAM-binding methyltransferase superfamily. CmoB family. In terms of assembly, homotetramer.

It carries out the reaction carboxy-S-adenosyl-L-methionine + 5-hydroxyuridine(34) in tRNA = 5-carboxymethoxyuridine(34) in tRNA + S-adenosyl-L-homocysteine + H(+). Functionally, catalyzes carboxymethyl transfer from carboxy-S-adenosyl-L-methionine (Cx-SAM) to 5-hydroxyuridine (ho5U) to form 5-carboxymethoxyuridine (cmo5U) at position 34 in tRNAs. This chain is tRNA U34 carboxymethyltransferase, found in Haemophilus influenzae (strain PittEE).